The following is a 459-amino-acid chain: Putrescine aminotransferase (459 aa).

Pyridoxal 5'-phosphate-binding positions include 150 to 151 (GT) and Gln274. Lys300 bears the N6-(pyridoxal phosphate)lysine mark. Thr332 serves as a coordination point for pyridoxal 5'-phosphate.

This sequence belongs to the class-III pyridoxal-phosphate-dependent aminotransferase family. Putrescine aminotransferase subfamily. It depends on pyridoxal 5'-phosphate as a cofactor.

The catalysed reaction is an alkane-alpha,omega-diamine + 2-oxoglutarate = an omega-aminoaldehyde + L-glutamate. It catalyses the reaction putrescine + 2-oxoglutarate = 1-pyrroline + L-glutamate + H2O. It carries out the reaction cadaverine + 2-oxoglutarate = 5-aminopentanal + L-glutamate. It participates in amine and polyamine degradation; putrescine degradation; 4-aminobutanal from putrescine (transaminase route): step 1/1. Catalyzes the aminotransferase reaction from putrescine to 2-oxoglutarate, leading to glutamate and 4-aminobutanal, which spontaneously cyclizes to form 1-pyrroline. This is the first step in one of two pathways for putrescine degradation, where putrescine is converted into 4-aminobutanoate (gamma-aminobutyrate or GABA) via 4-aminobutanal. Also functions as a cadaverine transaminase in a a L-lysine degradation pathway to succinate that proceeds via cadaverine, glutarate and L-2-hydroxyglutarate. The polypeptide is Putrescine aminotransferase (Shigella boydii serotype 4 (strain Sb227)).